A 108-amino-acid chain; its full sequence is UPF0060 membrane protein YnfA (108 aa).

Residues 1-5 (MFKTT) lie on the Periplasmic side of the membrane. Residues 6–26 (LLFFITALCEIIGCFLPWLWL) form a helical membrane-spanning segment. The Cytoplasmic portion of the chain corresponds to 27-30 (KRNG). A helical membrane pass occupies residues 31-51 (SIWLLLPAGVSLAFFVWLLTL). Over 52–60 (HPAASGRVY) the chain is Periplasmic. The helical transmembrane segment at 61–81 (AAYGGVYVCTALLWLRFIDGV) threads the bilayer. Residues 82–84 (KLS) are Cytoplasmic-facing. The helical transmembrane segment at 85–105 (LYDWSGALIALCGMLIIVAGW) threads the bilayer. The Periplasmic segment spans residues 106–108 (GRA).

This sequence belongs to the UPF0060 family.

It localises to the cell inner membrane. In Escherichia fergusonii (strain ATCC 35469 / DSM 13698 / CCUG 18766 / IAM 14443 / JCM 21226 / LMG 7866 / NBRC 102419 / NCTC 12128 / CDC 0568-73), this protein is UPF0060 membrane protein YnfA.